A 412-amino-acid chain; its full sequence is Alpha-2,8-sialyltransferase 8E (412 aa).

Residues 1-16 (MRYADPSANRDLLGNR) are Cytoplasmic-facing. The chain crosses the membrane as a helical; Signal-anchor for type II membrane protein span at residues 17-37 (TLLFIFICAFALVTLLQQILY). Residues 38–412 (SKSYIKRGFQ…RVHTGTCNCC (375 aa)) are Lumenal-facing. Residues Asn58, Asn64, Asn73, and Asn92 are each glycosylated (N-linked (GlcNAc...) asparagine). Cystine bridges form between Cys200–Cys349 and Cys214–Cys409. Substrate-binding positions include Asn228 and 250 to 252 (NPS). An N-linked (GlcNAc...) asparagine glycan is attached at Asn277. 336–338 (STG) is a binding site for substrate. The Proton donor/acceptor role is filled by His384.

Belongs to the glycosyltransferase 29 family. Highly expressed in brain. Expressed at low levels in other tissues, including liver, testis, lung, placenta and spleen.

Its subcellular location is the golgi apparatus membrane. It carries out the reaction a ganglioside GT1b (d18:1(4E)) + CMP-N-acetyl-beta-neuraminate = a ganglioside GQ1b (d18:1(4E)) + CMP + H(+). The catalysed reaction is a ganglioside GD3 (d18:1(4E)) + CMP-N-acetyl-beta-neuraminate = a ganglioside GT3 (d18:1(4E)) + CMP + H(+). The enzyme catalyses a ganglioside GD1a (d18:1(4E)) + CMP-N-acetyl-beta-neuraminate = a ganglioside GT1a (d18:1(4E)) + CMP + H(+). It catalyses the reaction a ganglioside GM1b (d18:1(4E)) + CMP-N-acetyl-beta-neuraminate = a ganglioside GD1c (d18:1(4E)) + CMP + H(+). It carries out the reaction a ganglioside GQ1c (d18:1(4E)) + CMP-N-acetyl-beta-neuraminate = a ganglioside GP1c (d18:1(4E)) + CMP + H(+). It participates in protein modification; protein glycosylation. Its function is as follows. Involved in the synthesis of gangliosides GD1c, GT1a, GQ1b, GP1c and GT3 from GD1a, GT1b, GM1b and GD3 respectively. This chain is Alpha-2,8-sialyltransferase 8E, found in Mus musculus (Mouse).